The chain runs to 276 residues: S-adenosylmethionine decarboxylase proenzyme (276 aa).

Residue S124 is the Schiff-base intermediate with substrate; via pyruvic acid of the active site. S124 carries the post-translational modification Pyruvic acid (Ser); by autocatalysis. H129 acts as the Proton acceptor; for processing activity in catalysis. C152 serves as the catalytic Proton donor; for catalytic activity.

This sequence belongs to the prokaryotic AdoMetDC family. Type 2 subfamily. Heterooctamer of four alpha and four beta chains arranged as a tetramer of alpha/beta heterodimers. The cofactor is pyruvate. In terms of processing, is synthesized initially as an inactive proenzyme. Formation of the active enzyme involves a self-maturation process in which the active site pyruvoyl group is generated from an internal serine residue via an autocatalytic post-translational modification. Two non-identical subunits are generated from the proenzyme in this reaction, and the pyruvate is formed at the N-terminus of the alpha chain, which is derived from the carboxyl end of the proenzyme. The post-translation cleavage follows an unusual pathway, termed non-hydrolytic serinolysis, in which the side chain hydroxyl group of the serine supplies its oxygen atom to form the C-terminus of the beta chain, while the remainder of the serine residue undergoes an oxidative deamination to produce ammonia and the pyruvoyl group blocking the N-terminus of the alpha chain.

It carries out the reaction S-adenosyl-L-methionine + H(+) = S-adenosyl 3-(methylsulfanyl)propylamine + CO2. It participates in amine and polyamine biosynthesis; S-adenosylmethioninamine biosynthesis; S-adenosylmethioninamine from S-adenosyl-L-methionine: step 1/1. Catalyzes the decarboxylation of S-adenosylmethionine to S-adenosylmethioninamine (dcAdoMet), the propylamine donor required for the synthesis of the polyamines spermine and spermidine from the diamine putrescine. In Desulfitobacterium hafniense (strain Y51), this protein is S-adenosylmethionine decarboxylase proenzyme.